The primary structure comprises 234 residues: Ubiquitin domain-containing protein 2 (234 aa).

The disordered stretch occupies residues 1–46 (MGGCVGAQHDSSGSLNENSDGTGVALGRNQPLKKEKPKWKSDYPMT). The span at 9-21 (HDSSGSLNENSDG) shows a compositional bias: polar residues. Basic and acidic residues predominate over residues 32–41 (LKKEKPKWKS). In terms of domain architecture, Ubiquitin-like spans 152–227 (SQLRLRLSTG…VQVIVSQPVQ (76 aa)).

It is found in the cytoplasm. The protein is Ubiquitin domain-containing protein 2 (Ubtd2) of Mus musculus (Mouse).